Consider the following 279-residue polypeptide: Tryptophan synthase alpha chain (279 aa).

Residues glutamate 50 and aspartate 61 each act as proton acceptor in the active site.

This sequence belongs to the TrpA family. Tetramer of two alpha and two beta chains.

The enzyme catalyses (1S,2R)-1-C-(indol-3-yl)glycerol 3-phosphate + L-serine = D-glyceraldehyde 3-phosphate + L-tryptophan + H2O. It functions in the pathway amino-acid biosynthesis; L-tryptophan biosynthesis; L-tryptophan from chorismate: step 5/5. Functionally, the alpha subunit is responsible for the aldol cleavage of indoleglycerol phosphate to indole and glyceraldehyde 3-phosphate. The chain is Tryptophan synthase alpha chain from Sinorhizobium medicae (strain WSM419) (Ensifer medicae).